The following is a 226-amino-acid chain: Enolase-phosphatase E1 (226 aa).

The protein belongs to the HAD-like hydrolase superfamily. MasA/MtnC family. In terms of assembly, monomer. Mg(2+) serves as cofactor.

The enzyme catalyses 5-methylsulfanyl-2,3-dioxopentyl phosphate + H2O = 1,2-dihydroxy-5-(methylsulfanyl)pent-1-en-3-one + phosphate. The protein operates within amino-acid biosynthesis; L-methionine biosynthesis via salvage pathway; L-methionine from S-methyl-5-thio-alpha-D-ribose 1-phosphate: step 3/6. Its pathway is amino-acid biosynthesis; L-methionine biosynthesis via salvage pathway; L-methionine from S-methyl-5-thio-alpha-D-ribose 1-phosphate: step 4/6. Its function is as follows. Bifunctional enzyme that catalyzes the enolization of 2,3-diketo-5-methylthiopentyl-1-phosphate (DK-MTP-1-P) into the intermediate 2-hydroxy-3-keto-5-methylthiopentenyl-1-phosphate (HK-MTPenyl-1-P), which is then dephosphorylated to form the acireductone 1,2-dihydroxy-3-keto-5-methylthiopentene (DHK-MTPene). The polypeptide is Enolase-phosphatase E1 (Shewanella baltica (strain OS155 / ATCC BAA-1091)).